The following is a 538-amino-acid chain: Syncytin-2 (538 aa).

Positions 1 to 15 (MGLLLLVLILTPLLA) are cleaved as a signal peptide. The Extracellular portion of the chain corresponds to 31-478 (LLQSTGSPYS…GWLNWEGTWK (448 aa)). The CXXC motif lies at 43–46 (CWLC). Intrachain disulfides connect cysteine 43-cysteine 46, cysteine 43-cysteine 439, and cysteine 431-cysteine 438. 8 N-linked (GlcNAc...) asparagine glycosylation sites follow: asparagine 133, asparagine 146, asparagine 177, asparagine 220, asparagine 241, asparagine 247, asparagine 312, and asparagine 332. A fusion peptide region spans residues 354 to 374 (FIPLLAGLGILAGTGTGIAGI). Residues 414–430 (LQNRRGLDMLTAAQGGI) carry the CKS-17 motif. The CX6CC motif lies at 431–439 (CLALDEKCC). Asparagine 443 is a glycosylation site (N-linked (GlcNAc...) asparagine). The helical transmembrane segment at 479–499 (WFSWVLPFIGPFVSLLLLLLF) threads the bilayer. At 500-538 (GPCLLNLITQFVSSRLQAIKLQTNLSAGRRPRTIQESPF) the chain is on the cytoplasmic side.

This sequence belongs to the gamma type-C retroviral envelope protein family. HERV class-I FRD env subfamily. As to quaternary structure, the surface and transmembrane proteins form a heterodimer. They are attached by non-covalent interactions or by a labile interchain disulfide bond. In terms of processing, specific enzymatic cleavages in vivo yield the mature SU and TM proteins. Post-translationally, the CXXC motif is highly conserved across a broad range of retroviral envelope proteins. It is thought to participate in the formation of a labile disulfide bond possibly with the CX6CC motif present in the transmembrane protein.

The protein localises to the cell membrane. In terms of biological role, this endogenous retroviral envelope protein has retained its original fusogenic properties and participates in trophoblast fusion and the formation of a syncytium during placenta morphogenesis. The interaction with MFSD2A is apparently important for this process. Its function is as follows. Endogenous envelope proteins may have kept, lost or modified their original function during evolution and this one is unable to confer infectivity. This is Syncytin-2 (ERVFRD-1) from Hylobates moloch (Silvery gibbon).